Here is a 425-residue protein sequence, read N- to C-terminus: Zinc finger protein 789 (425 aa).

Residues 11 to 82 (LSFEDVAMYF…DLPRTGNRKA (72 aa)) enclose the KRAB domain. 8 consecutive C2H2-type zinc fingers follow at residues 201 to 223 (YECSECGKVIRRKAWFDQHQRIH), 229 to 251 (FECKVCGQAFRQRSALTVHKQCH), 257 to 279 (YRCHDCGKCFRQLAYLVEHKRIH), 285 to 307 (YKCSKCEKTFSQNSTLIRHQVIH), 313 to 335 (HKCLECGKAFGRHSTLLCHQQIH), 341 to 363 (HKCSECGQSFGRNVDLIQHQRIH), 369 to 391 (FQCGECGKTFSFKRNLFRHQVIH), and 397 to 419 (YQCVICGKSFKWHTSFIKHQGTH).

It belongs to the krueppel C2H2-type zinc-finger protein family.

It is found in the nucleus. May be involved in transcriptional regulation. This is Zinc finger protein 789 (ZNF789) from Homo sapiens (Human).